The following is a 132-amino-acid chain: Small ribosomal subunit protein uS8c (132 aa).

It belongs to the universal ribosomal protein uS8 family. Part of the 30S ribosomal subunit.

The protein resides in the plastid. The protein localises to the chloroplast. Its function is as follows. One of the primary rRNA binding proteins, it binds directly to 16S rRNA central domain where it helps coordinate assembly of the platform of the 30S subunit. The sequence is that of Small ribosomal subunit protein uS8c (rps8) from Adiantum capillus-veneris (Maidenhair fern).